We begin with the raw amino-acid sequence, 267 residues long: REH2-associated factor 2 (267 aa).

In terms of assembly, component of the REH2-associated complex (REH2C) composed of helicase REH2, associated factors H2F1 and H2F2, and mRNAs at various editing stages; the formation of the complex is RNA-independent. Interacts with various editing complexes including the RNA editing core (RECC) complex, the gRNA-binding (GRBC) complex (also known as the MRB1 complex) and the RNA editing mediator (REMC) complex.

It is found in the mitochondrion. May play a role in mitochondrial mRNA editing by facilitating the association of the gRNA-binding (GRBC) complex with the RNA editing core (RECC) complex. However, appears to be dispensable for mRNA editing per se. The protein is REH2-associated factor 2 of Trypanosoma brucei brucei (strain 927/4 GUTat10.1).